The sequence spans 249 residues: Homeobox protein TGIF2LX (249 aa).

2 disordered regions span residues 1–65 (MEAA…GYSP) and 126–199 (DPIV…PKKK). The segment covering 9 to 27 (AETRSRVEKDSRRAIKDSP) has biased composition (basic and acidic residues). Polar residues predominate over residues 28 to 46 (AKTQSPAQDTSIMLRNNAD). The segment at residues 55 to 118 (EHKKKRKGYS…INARRRILPD (64 aa)) is a DNA-binding region (homeobox; TALE-type). Over residues 159–172 (DNVQSLPLRSSPKG) the composition is skewed to polar residues.

The protein belongs to the TALE/TGIF homeobox family.

The protein localises to the nucleus. May have a transcription role in testis. This chain is Homeobox protein TGIF2LX (TGIF2LX), found in Macaca mulatta (Rhesus macaque).